Consider the following 238-residue polypeptide: Ribonuclease PH (238 aa).

The disordered stretch occupies residues 67-87 (PRSTHTRSDREAARGKQSGRT). Phosphate contacts are provided by residues Arg-86 and 124–126 (GTR).

The protein belongs to the RNase PH family. Homohexameric ring arranged as a trimer of dimers.

The catalysed reaction is tRNA(n+1) + phosphate = tRNA(n) + a ribonucleoside 5'-diphosphate. Phosphorolytic 3'-5' exoribonuclease that plays an important role in tRNA 3'-end maturation. Removes nucleotide residues following the 3'-CCA terminus of tRNAs; can also add nucleotides to the ends of RNA molecules by using nucleoside diphosphates as substrates, but this may not be physiologically important. Probably plays a role in initiation of 16S rRNA degradation (leading to ribosome degradation) during starvation. The sequence is that of Ribonuclease PH from Ralstonia nicotianae (strain ATCC BAA-1114 / GMI1000) (Ralstonia solanacearum).